Consider the following 355-residue polypeptide: Eukaryotic initiation factor 4A-13 (355 aa).

The short motif at 40 to 68 is the Q motif element; sequence DSFDAMGLQENLLRGIYAYGFEKPSAIQQ. One can recognise a Helicase ATP-binding domain in the interval 71–241; it reads IVPFCKGLDV…RKFMNQPVRI (171 aa). 84–91 lines the ATP pocket; the sequence is AQSGTGKT. Residues 189–192 carry the DEAD box motif; that stretch reads DEAD. In terms of domain architecture, Helicase C-terminal spans 252–355; it reads GIKQFYVNVD…QQVSLVINYD (104 aa).

This sequence belongs to the DEAD box helicase family. eIF4A subfamily. In terms of assembly, eIF4F is a multi-subunit complex, the composition of which varies with external and internal environmental conditions. It is composed of at least EIF4A, EIF4E and EIF4G.

It catalyses the reaction ATP + H2O = ADP + phosphate + H(+). ATP-dependent RNA helicase which is a subunit of the eIF4F complex involved in cap recognition and is required for mRNA binding to ribosome. In the current model of translation initiation, eIF4A unwinds RNA secondary structures in the 5'-UTR of mRNAs which is necessary to allow efficient binding of the small ribosomal subunit, and subsequent scanning for the initiator codon. This chain is Eukaryotic initiation factor 4A-13, found in Nicotiana tabacum (Common tobacco).